The chain runs to 21 residues: Glutathione S-transferase 1 (21 aa).

It belongs to the GST superfamily. Phi family.

It catalyses the reaction RX + glutathione = an S-substituted glutathione + a halide anion + H(+). In terms of biological role, conjugation of reduced glutathione to a wide number of exogenous and endogenous hydrophobic electrophiles. In plants, may have a detoxification role against certain herbicides. The polypeptide is Glutathione S-transferase 1 (Populus euphratica (Euphrates poplar)).